The chain runs to 444 residues: Chromosome partition protein MukF (444 aa).

A leucine-zipper region spans residues Leu212–Ile240.

Belongs to the MukF family. Interacts, and probably forms a ternary complex, with MukE and MukB via its C-terminal region. The complex formation is stimulated by calcium or magnesium. It is required for an interaction between MukE and MukB.

It is found in the cytoplasm. The protein localises to the nucleoid. Functionally, involved in chromosome condensation, segregation and cell cycle progression. May participate in facilitating chromosome segregation by condensation DNA from both sides of a centrally located replisome during cell division. Not required for mini-F plasmid partitioning. Probably acts via its interaction with MukB and MukE. Overexpression results in anucleate cells. It has a calcium binding activity. This Haemophilus influenzae (strain ATCC 51907 / DSM 11121 / KW20 / Rd) protein is Chromosome partition protein MukF.